A 160-amino-acid chain; its full sequence is Transcription antitermination protein NusB (160 aa).

Belongs to the NusB family.

Its function is as follows. Involved in transcription antitermination. Required for transcription of ribosomal RNA (rRNA) genes. Binds specifically to the boxA antiterminator sequence of the ribosomal RNA (rrn) operons. The protein is Transcription antitermination protein NusB of Gluconobacter oxydans (strain 621H) (Gluconobacter suboxydans).